The sequence spans 362 residues: Phospho-N-acetylmuramoyl-pentapeptide-transferase (362 aa).

The next 10 helical transmembrane spans lie at 21–41, 75–95, 100–120, 136–156, 170–190, 201–221, 225–245, 247–267, 290–310, and 339–359; these read YITF…FLLG, TMGG…WADL, VWAV…DDFL, LVVQ…LMPG, LMIP…MGAS, GLAI…AYLV, IFSH…AVFC, ALIG…AVFM, IVLA…IVQV, and TVVI…LATL.

Belongs to the glycosyltransferase 4 family. MraY subfamily. Mg(2+) is required as a cofactor.

It is found in the cell inner membrane. It catalyses the reaction UDP-N-acetyl-alpha-D-muramoyl-L-alanyl-gamma-D-glutamyl-meso-2,6-diaminopimeloyl-D-alanyl-D-alanine + di-trans,octa-cis-undecaprenyl phosphate = di-trans,octa-cis-undecaprenyl diphospho-N-acetyl-alpha-D-muramoyl-L-alanyl-D-glutamyl-meso-2,6-diaminopimeloyl-D-alanyl-D-alanine + UMP. The protein operates within cell wall biogenesis; peptidoglycan biosynthesis. Its function is as follows. Catalyzes the initial step of the lipid cycle reactions in the biosynthesis of the cell wall peptidoglycan: transfers peptidoglycan precursor phospho-MurNAc-pentapeptide from UDP-MurNAc-pentapeptide onto the lipid carrier undecaprenyl phosphate, yielding undecaprenyl-pyrophosphoryl-MurNAc-pentapeptide, known as lipid I. This Acidiphilium cryptum (strain JF-5) protein is Phospho-N-acetylmuramoyl-pentapeptide-transferase.